The chain runs to 376 residues: Putative F-box protein At2g33200 (376 aa).

One can recognise an F-box domain in the interval 6–53 (YDWSKLCHDILRLILESLHYKDYHRARTVCSNWYTASTTCKRPLYPWR).

This chain is Putative F-box protein At2g33200, found in Arabidopsis thaliana (Mouse-ear cress).